The primary structure comprises 168 residues: Cell division inhibitor SulA (168 aa).

Positions 105–111 (ALETGNY) are ftsZ binding. The segment at 161 to 168 (RIHSRMVH) is lon protease binding.

Belongs to the SulA family. As to quaternary structure, interacts with FtsZ. In terms of processing, is rapidly cleaved and degraded by the Lon protease once DNA damage is repaired.

In terms of biological role, component of the SOS system and an inhibitor of cell division. Accumulation of SulA causes rapid cessation of cell division and the appearance of long, non-septate filaments. In the presence of GTP, binds a polymerization-competent form of FtsZ in a 1:1 ratio, thus inhibiting FtsZ polymerization and therefore preventing it from participating in the assembly of the Z ring. This mechanism prevents the premature segregation of damaged DNA to daughter cells during cell division. The chain is Cell division inhibitor SulA from Cronobacter turicensis (strain DSM 18703 / CCUG 55852 / LMG 23827 / z3032).